Here is a 199-residue protein sequence, read N- to C-terminus: dITP/XTP pyrophosphatase (199 aa).

8–13 (SGNAGK) serves as a coordination point for substrate. Asp69 functions as the Proton acceptor in the catalytic mechanism. Position 69 (Asp69) interacts with Mg(2+). Residues Ser70, 154-157 (FGYN), Lys177, and 182-183 (HR) each bind substrate.

The protein belongs to the HAM1 NTPase family. In terms of assembly, homodimer. Mg(2+) serves as cofactor.

The enzyme catalyses XTP + H2O = XMP + diphosphate + H(+). It catalyses the reaction dITP + H2O = dIMP + diphosphate + H(+). The catalysed reaction is ITP + H2O = IMP + diphosphate + H(+). Pyrophosphatase that catalyzes the hydrolysis of nucleoside triphosphates to their monophosphate derivatives, with a high preference for the non-canonical purine nucleotides XTP (xanthosine triphosphate), dITP (deoxyinosine triphosphate) and ITP. Seems to function as a house-cleaning enzyme that removes non-canonical purine nucleotides from the nucleotide pool, thus preventing their incorporation into DNA/RNA and avoiding chromosomal lesions. The chain is dITP/XTP pyrophosphatase from Xanthomonas oryzae pv. oryzae (strain KACC10331 / KXO85).